A 362-amino-acid polypeptide reads, in one-letter code: N5-carboxyaminoimidazole ribonucleotide synthase (362 aa).

Residues arginine 85, lysine 125, 130 to 136 (GYDGRGQ), 158 to 161 (EKFI), glutamate 166, and 244 to 245 (NE) contribute to the ATP site. One can recognise an ATP-grasp domain in the interval 89 to 274 (KSLLDELNLS…QFELHLRALL (186 aa)).

Belongs to the PurK/PurT family. In terms of assembly, homodimer.

The catalysed reaction is 5-amino-1-(5-phospho-beta-D-ribosyl)imidazole + hydrogencarbonate + ATP = 5-carboxyamino-1-(5-phospho-D-ribosyl)imidazole + ADP + phosphate + 2 H(+). Its pathway is purine metabolism; IMP biosynthesis via de novo pathway; 5-amino-1-(5-phospho-D-ribosyl)imidazole-4-carboxylate from 5-amino-1-(5-phospho-D-ribosyl)imidazole (N5-CAIR route): step 1/2. Catalyzes the ATP-dependent conversion of 5-aminoimidazole ribonucleotide (AIR) and HCO(3)(-) to N5-carboxyaminoimidazole ribonucleotide (N5-CAIR). This is N5-carboxyaminoimidazole ribonucleotide synthase from Haemophilus influenzae (strain ATCC 51907 / DSM 11121 / KW20 / Rd).